The chain runs to 495 residues: Acetyl-coenzyme A carboxylase carboxyl transferase subunit beta, chloroplastic (495 aa).

The tract at residues 187–208 is disordered; sequence ESRNSSENEGSSRRTRTKGSDL. Residues 226-495 enclose the CoA carboxyltransferase N-terminal domain; the sequence is LWVQCENCYG…PLNQKSSKIK (270 aa). Zn(2+)-binding residues include C230, C233, C249, and C252. The segment at 230 to 252 adopts a C4-type zinc-finger fold; sequence CENCYGLNYKKFLKSKMNICEQC.

Belongs to the AccD/PCCB family. As to quaternary structure, acetyl-CoA carboxylase is a heterohexamer composed of biotin carboxyl carrier protein, biotin carboxylase and 2 subunits each of ACCase subunit alpha and ACCase plastid-coded subunit beta (accD). The cofactor is Zn(2+). RNA expressed in leaf, root and stem; the least expression occurs in stems.

The protein localises to the plastid. It is found in the chloroplast stroma. It catalyses the reaction N(6)-carboxybiotinyl-L-lysyl-[protein] + acetyl-CoA = N(6)-biotinyl-L-lysyl-[protein] + malonyl-CoA. It functions in the pathway lipid metabolism; malonyl-CoA biosynthesis; malonyl-CoA from acetyl-CoA: step 1/1. Component of the acetyl coenzyme A carboxylase (ACC) complex. Biotin carboxylase (BC) catalyzes the carboxylation of biotin on its carrier protein (BCCP) and then the CO(2) group is transferred by the transcarboxylase to acetyl-CoA to form malonyl-CoA. In Nicotiana tabacum (Common tobacco), this protein is Acetyl-coenzyme A carboxylase carboxyl transferase subunit beta, chloroplastic.